A 181-amino-acid polypeptide reads, in one-letter code: Transcription termination/antitermination protein NusG (181 aa).

The 29-residue stretch at proline 130 to leucine 158 folds into the KOW domain.

It belongs to the NusG family. As to quaternary structure, monomer. Interacts with the transcription termination factor Rho and with RNA polymerase.

In terms of biological role, participates in transcription elongation, termination and antitermination. In the absence of Rho, increases the rate of transcription elongation by the RNA polymerase (RNAP), probably by partially suppressing pausing. In the presence of Rho, modulates most Rho-dependent termination events by interacting with the RNAP to render the complex more susceptible to the termination activity of Rho. May be required to overcome a kinetic limitation of Rho to function at certain terminators. Also involved in ribosomal RNA transcriptional antitermination. This is Transcription termination/antitermination protein NusG from Buchnera aphidicola subsp. Baizongia pistaciae (strain Bp).